The sequence spans 426 residues: Serine--tRNA ligase (426 aa).

An L-serine-binding site is contributed by 233–235; that stretch reads TAE. Residue 264–266 participates in ATP binding; sequence RAE. Glu287 is a binding site for L-serine. 351–354 contributes to the ATP binding site; it reads EISS. Ser387 serves as a coordination point for L-serine.

Belongs to the class-II aminoacyl-tRNA synthetase family. Type-1 seryl-tRNA synthetase subfamily. In terms of assembly, homodimer. The tRNA molecule binds across the dimer.

The protein localises to the cytoplasm. The enzyme catalyses tRNA(Ser) + L-serine + ATP = L-seryl-tRNA(Ser) + AMP + diphosphate + H(+). The catalysed reaction is tRNA(Sec) + L-serine + ATP = L-seryl-tRNA(Sec) + AMP + diphosphate + H(+). It functions in the pathway aminoacyl-tRNA biosynthesis; selenocysteinyl-tRNA(Sec) biosynthesis; L-seryl-tRNA(Sec) from L-serine and tRNA(Sec): step 1/1. Its function is as follows. Catalyzes the attachment of serine to tRNA(Ser). Is also able to aminoacylate tRNA(Sec) with serine, to form the misacylated tRNA L-seryl-tRNA(Sec), which will be further converted into selenocysteinyl-tRNA(Sec). The chain is Serine--tRNA ligase from Clostridium kluyveri (strain NBRC 12016).